The primary structure comprises 288 residues: S-methyl-5'-thioadenosine phosphorylase (288 aa).

Phosphate-binding positions include S10, R52–H53, and T85–A86. A substrate-binding site is contributed by M188. Residue T189 coordinates phosphate. D212–D214 provides a ligand contact to substrate.

This sequence belongs to the PNP/MTAP phosphorylase family. MTAP subfamily. As to quaternary structure, homotrimer.

Its subcellular location is the cytoplasm. The protein resides in the nucleus. It catalyses the reaction S-methyl-5'-thioadenosine + phosphate = 5-(methylsulfanyl)-alpha-D-ribose 1-phosphate + adenine. The protein operates within amino-acid biosynthesis; L-methionine biosynthesis via salvage pathway; S-methyl-5-thio-alpha-D-ribose 1-phosphate from S-methyl-5'-thioadenosine (phosphorylase route): step 1/1. Functionally, catalyzes the reversible phosphorylation of S-methyl-5'-thioadenosine (MTA) to adenine and 5-methylthioribose-1-phosphate. Involved in the breakdown of MTA, a major by-product of polyamine biosynthesis. Responsible for the first step in the methionine salvage pathway after MTA has been generated from S-adenosylmethionine. Has broad substrate specificity with 6-aminopurine nucleosides as preferred substrates. The protein is S-methyl-5'-thioadenosine phosphorylase of Caenorhabditis elegans.